The primary structure comprises 418 residues: Histidine--tRNA ligase (418 aa).

The protein belongs to the class-II aminoacyl-tRNA synthetase family.

The protein localises to the cytoplasm. The catalysed reaction is tRNA(His) + L-histidine + ATP = L-histidyl-tRNA(His) + AMP + diphosphate + H(+). The polypeptide is Histidine--tRNA ligase (Methanococcus maripaludis (strain C7 / ATCC BAA-1331)).